A 434-amino-acid polypeptide reads, in one-letter code: Arrestin domain-containing protein 1 (434 aa).

The disordered stretch occupies residues 292–349 (SPCPGRESSPGTLSLVVPSAPPQEEAEAVASGPHFSDPVSLSTKSHSQQQPLSAPLGS). The span at 330–343 (VSLSTKSHSQQQPL) shows a compositional bias: polar residues. Short sequence motifs (PPxY motif) lie at residues 401–404 (PPEY) and 414–417 (PPSY).

The protein belongs to the arrestin family. Interacts (via PPxY motifs) with ITCH (via WW domains); the interaction is direct and participates in the recruitment of the ubiquitin-protein ligase ITCH to the NOTCH1 receptor. Interacts with ARRB1 and ARRB2; the interaction is direct. Interacts with TSG101; may recruit TSG101 to the plasma membrane. Interacts (via PPxY motifs) with WWP2 (via WW domains); ubiquitinates ARRDC1. Interacts with SLC11A2; controls the incorporation of SLC11A2 into extracellular vesicles through an ubiquitination-dependent mechanism. Interacts with WWP1 (via WW domains). Interacts with NEDD4 (via WW domains). Interacts with PDCD6IP. In terms of processing, ubiquitinated. Ubiquitination by WWP2; promotes localization to extracellular microvesicles. Ubiquitinated by WWP1.

The protein localises to the cell membrane. Functionally, functions as an adapter recruiting ubiquitin-protein ligases to their specific substrates. Through an ubiquitination-dependent mechanism plays for instance a role in the incorporation of SLC11A2 into extracellular vesicles. More generally, plays a role in the extracellular transport of proteins between cells through the release in the extracellular space of microvesicles. By participating to the ITCH-mediated ubiquitination and subsequent degradation of NOTCH1, negatively regulates the NOTCH signaling pathway. This chain is Arrestin domain-containing protein 1, found in Mus musculus (Mouse).